A 286-amino-acid polypeptide reads, in one-letter code: Flagellin FlaB1 (286 aa).

Residues 231–286 form a required for interaction with FliW region; the sequence is LDIAAENLQAAESRIRDANIAKQMVEYTKNQVLTQSGTAMLAQANTSAQSILSILR.

The protein belongs to the bacterial flagellin family. In terms of assembly, the flagellum consists of an outer layer composed of repeating units of FlaA around a core that contains several antigenically related polypeptides. Interacts via its C-terminus with FliW; a synthetic peptide of residues 229-247 partially blocks binding to FliW.

It localises to the periplasmic flagellum. Its subcellular location is the periplasm. Component of the core of the flagella. The chain is Flagellin FlaB1 (flaB1) from Treponema pallidum (strain Nichols).